The primary structure comprises 161 residues: Allophycocyanin beta chain (161 aa).

N4-methylasparagine is present on Asn-71. Cys-81 contacts (2R,3E)-phycocyanobilin.

It belongs to the phycobiliprotein family. As to quaternary structure, heterodimer of an alpha and a beta chain. Post-translationally, contains one covalently linked phycocyanobilin chromophore.

It localises to the plastid. The protein localises to the cyanelle thylakoid membrane. Light-harvesting photosynthetic bile pigment-protein from the phycobiliprotein complex. Allophycocyanin has a maximum absorption at approximately 650 nanometers. This Cyanophora paradoxa protein is Allophycocyanin beta chain (apcB).